The primary structure comprises 255 residues: Imidazole glycerol phosphate synthase subunit HisF (255 aa).

Active-site residues include aspartate 12 and aspartate 131.

This sequence belongs to the HisA/HisF family. Heterodimer of HisH and HisF.

Its subcellular location is the cytoplasm. The enzyme catalyses 5-[(5-phospho-1-deoxy-D-ribulos-1-ylimino)methylamino]-1-(5-phospho-beta-D-ribosyl)imidazole-4-carboxamide + L-glutamine = D-erythro-1-(imidazol-4-yl)glycerol 3-phosphate + 5-amino-1-(5-phospho-beta-D-ribosyl)imidazole-4-carboxamide + L-glutamate + H(+). It functions in the pathway amino-acid biosynthesis; L-histidine biosynthesis; L-histidine from 5-phospho-alpha-D-ribose 1-diphosphate: step 5/9. In terms of biological role, IGPS catalyzes the conversion of PRFAR and glutamine to IGP, AICAR and glutamate. The HisF subunit catalyzes the cyclization activity that produces IGP and AICAR from PRFAR using the ammonia provided by the HisH subunit. This chain is Imidazole glycerol phosphate synthase subunit HisF, found in Zymomonas mobilis subsp. mobilis (strain ATCC 31821 / ZM4 / CP4).